A 112-amino-acid chain; its full sequence is Nucleoid-associated protein FTH_1374 (112 aa).

Residues 1–27 (MNFDMSKLMQQAQKMQEQMKKAQQERE) are disordered. Residues 17-27 (EQMKKAQQERE) are compositionally biased toward basic and acidic residues.

It belongs to the YbaB/EbfC family. As to quaternary structure, homodimer.

It localises to the cytoplasm. The protein resides in the nucleoid. Binds to DNA and alters its conformation. May be involved in regulation of gene expression, nucleoid organization and DNA protection. The protein is Nucleoid-associated protein FTH_1374 of Francisella tularensis subsp. holarctica (strain OSU18).